Here is a 101-residue protein sequence, read N- to C-terminus: Small ribosomal subunit protein uS10 (101 aa).

Belongs to the universal ribosomal protein uS10 family. As to quaternary structure, part of the 30S ribosomal subunit.

Involved in the binding of tRNA to the ribosomes. The polypeptide is Small ribosomal subunit protein uS10 (Brachyspira hyodysenteriae (Treponema hyodysenteriae)).